The following is a 67-amino-acid chain: ORF2p protein (67 aa).

The interval 13–18 (WIGHPV) is important for viral replication in intestinal cells. A membrane pass occupies residues 22–38 (AIIYPFVGFIPLSLKEV).

It localises to the host cytoplasmic vesicle membrane. Functionally, facilitates virus release from intestinal cells in vitro, possibly through the host autophagic pathway. The polypeptide is ORF2p protein (Homo sapiens (Human)).